Reading from the N-terminus, the 158-residue chain is Rhombotin-2 (158 aa).

LIM zinc-binding domains lie at 30-89 (CGGC…RLFG) and 94-153 (CASC…EWTK).

As to quaternary structure, interacts via its LIM domains with ELF2 and LDB1. Also interacts with basic helix-loop-helix protein TAL1/SCL and can assemble in a complex with LMO2 and TAL1/SCL. Interacts with BEX2 and KDM5A.

The protein localises to the nucleus. In terms of biological role, acts with TAL1/SCL to regulate red blood cell development. Also acts with LDB1 to maintain erythroid precursors in an immature state. This chain is Rhombotin-2 (LMO2), found in Homo sapiens (Human).